A 633-amino-acid polypeptide reads, in one-letter code: Probable potassium transport system protein Kup 2 (633 aa).

11 helical membrane-spanning segments follow: residues I59–M79, I110–A130, T145–F165, I173–I193, G219–L239, F256–V276, L287–I307, I345–F365, A374–I394, L402–S422, and E429–V449.

The protein belongs to the HAK/KUP transporter (TC 2.A.72) family.

Its subcellular location is the cell inner membrane. The enzyme catalyses K(+)(in) + H(+)(in) = K(+)(out) + H(+)(out). Its function is as follows. Transport of potassium into the cell. Likely operates as a K(+):H(+) symporter. The chain is Probable potassium transport system protein Kup 2 from Cupriavidus necator (strain ATCC 17699 / DSM 428 / KCTC 22496 / NCIMB 10442 / H16 / Stanier 337) (Ralstonia eutropha).